Here is a 180-residue protein sequence, read N- to C-terminus: MSRIGKKPVPIPQNVQVEIKDGNCVLVKGPLGQLEKTFSPLLTIKKVDNQIVVERPNDEKFVKALHGLTRALINNMVLGVTQGFEKRLELQGTGYRARVQGNKLILEVGFSHPVELEIPTGLTVTVQDNTKISVKGIDKELVGQFAAIVRSVRPAEPYKGKGIRYEGEKIRQKAGKAGKK.

It belongs to the universal ribosomal protein uL6 family. Part of the 50S ribosomal subunit.

In terms of biological role, this protein binds to the 23S rRNA, and is important in its secondary structure. It is located near the subunit interface in the base of the L7/L12 stalk, and near the tRNA binding site of the peptidyltransferase center. The sequence is that of Large ribosomal subunit protein uL6 from Dictyoglomus thermophilum (strain ATCC 35947 / DSM 3960 / H-6-12).